We begin with the raw amino-acid sequence, 405 residues long: Calsequestrin-1 (405 aa).

An N-terminal signal peptide occupies residues 1–34; it reads MRATDRMGARAVSELRLALLFVLVLGTPRLGVQG. Tyr-43 is modified (phosphotyrosine). A Phosphoserine modification is found at Ser-81. Thr-124 is subject to Phosphothreonine. At Ser-216 the chain carries Phosphoserine. A glycan (N-linked (GlcNAc...) asparagine) is linked at Asn-350. Positions 382–405 are disordered; sequence EGEINTEDDDDDDDDDDDDDDDDD.

The protein belongs to the calsequestrin family. In terms of assembly, monomer; increases in response to a depletion of intracellular calcium. Homodimer. Homotetramer and homopolymer. Can form linear homooligomers. Ca(2+) ions promote oligomerization. Interacts (via C-terminal end and preferentially with the monomeric form) with STIM1; this interaction increases in response to a depletion of intracellular calcium, decreases both STIM1 aggregation and clustering, interaction of STIM1 with ORAI1 and store-operated Ca(2+) entry (SOCE) activity. Interacts with ASPH and TRDN. In terms of processing, N-glycosylated. Detected in skeletal muscle (at protein level). Detected in skeletal muscle.

It localises to the endoplasmic reticulum. It is found in the sarcoplasmic reticulum. The protein localises to the sarcoplasmic reticulum lumen. Its subcellular location is the sarcoplasmic reticulum membrane. The protein resides in the mitochondrion matrix. Its function is as follows. Calsequestrin is a high-capacity, moderate affinity, calcium-binding protein and thus acts as an internal calcium store in muscle. Calcium ions are bound by clusters of acidic residues at the protein surface, often at the interface between subunits. Can bind around 80 Ca(2+) ions. Regulates the release of lumenal Ca(2+) via the calcium release channel RYR1; this plays an important role in triggering muscle contraction. Negatively regulates store-operated Ca(2+) entry (SOCE) activity. This Mus musculus (Mouse) protein is Calsequestrin-1 (Casq1).